Here is a 274-residue protein sequence, read N- to C-terminus: Uridine-5'-phosphate dioxygenase (274 aa).

Residues H103, D105, and H246 each coordinate Fe cation.

Fe(2+) is required as a cofactor.

The enzyme catalyses UMP + 2-oxoglutarate + O2 = uridine-5'-aldehyde + succinate + phosphate + CO2. It participates in antibiotic biosynthesis. With respect to regulation, inhibited by several divalent cations, including Zn(2+). Dioxygenase involved in the biosynthesis of the lipopeptidyl nucleoside antibiotic A-90289. Catalyzes the dephosphorylation and oxidation of UMP to generate uridine-5'-aldehyde, the first intermediate in the biosynthesis of A-90289. The sequence is that of Uridine-5'-phosphate dioxygenase from Streptomyces sp.